Consider the following 358-residue polypeptide: Histidinol-phosphate aminotransferase (358 aa).

K218 bears the N6-(pyridoxal phosphate)lysine mark.

Belongs to the class-II pyridoxal-phosphate-dependent aminotransferase family. Histidinol-phosphate aminotransferase subfamily. As to quaternary structure, homodimer. It depends on pyridoxal 5'-phosphate as a cofactor.

The enzyme catalyses L-histidinol phosphate + 2-oxoglutarate = 3-(imidazol-4-yl)-2-oxopropyl phosphate + L-glutamate. Its pathway is amino-acid biosynthesis; L-histidine biosynthesis; L-histidine from 5-phospho-alpha-D-ribose 1-diphosphate: step 7/9. The chain is Histidinol-phosphate aminotransferase from Dehalococcoides mccartyi (strain CBDB1).